We begin with the raw amino-acid sequence, 339 residues long: DNA-directed RNA polymerase subunit alpha (339 aa).

The tract at residues 1–233 (MVREKVRIST…DLFIPFLHAE (233 aa)) is alpha N-terminal domain (alpha-NTD). The tract at residues 267–339 (IALKSIFIDQ…FTINLPKNKF (73 aa)) is alpha C-terminal domain (alpha-CTD).

This sequence belongs to the RNA polymerase alpha chain family. In plastids the minimal PEP RNA polymerase catalytic core is composed of four subunits: alpha, beta, beta', and beta''. When a (nuclear-encoded) sigma factor is associated with the core the holoenzyme is formed, which can initiate transcription.

It is found in the plastid. It localises to the chloroplast. It catalyses the reaction RNA(n) + a ribonucleoside 5'-triphosphate = RNA(n+1) + diphosphate. In terms of biological role, DNA-dependent RNA polymerase catalyzes the transcription of DNA into RNA using the four ribonucleoside triphosphates as substrates. The protein is DNA-directed RNA polymerase subunit alpha of Populus alba (White poplar).